The primary structure comprises 271 residues: MWELRSIAFSRAVLAEFLATLLFVFFGLGSALNWPQALPSVLQIAMAFGLAIGTLVQALGHVSGAHINPAVTVACLVGCHVSFLRAVFYVAAQLLGAVAGAALLHEITPPAIRGDLAVNALNNNSTAGQAVTVELFLTLQLVLCIFASTDERRGDNVGTPALSIGFSVALGHLLGIHYTGCSMNPARSLAPAIVTGKFDDHWVFWIGPLVGAIVASLLYNYVLFPPAKSLSERLAVLKGLEPDTDWEEREVRRRQSVELHSPQSLPRGSKA.

The Cytoplasmic portion of the chain corresponds to 1–11 (MWELRSIAFSR). The helical transmembrane segment at 12–32 (AVLAEFLATLLFVFFGLGSAL) threads the bilayer. Topologically, residues 33-40 (NWPQALPS) are extracellular. A helical transmembrane segment spans residues 41–59 (VLQIAMAFGLAIGTLVQAL). The Cytoplasmic portion of the chain corresponds to 60-64 (GHVSG). The discontinuously helical intramembrane region spans 65 to 74 (AHINPAVTVA). The short motif at 68–70 (NPA) is the NPA 1 element. The Cytoplasmic segment spans residues 75–85 (CLVGCHVSFLR). Residues 86 to 107 (AVFYVAAQLLGAVAGAALLHEI) traverse the membrane as a helical segment. At 108 to 127 (TPPAIRGDLAVNALNNNSTA) the chain is on the extracellular side. An N-linked (GlcNAc...) asparagine glycan is attached at N123. A helical transmembrane segment spans residues 128–148 (GQAVTVELFLTLQLVLCIFAS). The Cytoplasmic segment spans residues 149 to 156 (TDERRGDN). A helical membrane pass occupies residues 157–176 (VGTPALSIGFSVALGHLLGI). The Extracellular portion of the chain corresponds to 177–180 (HYTG). Positions 181–193 (CSMNPARSLAPAI) form an intramembrane region, discontinuously helical. The short motif at 184-186 (NPA) is the NPA 2 element. The Extracellular segment spans residues 194-201 (VTGKFDDH). Residues 202–222 (WVFWIGPLVGAIVASLLYNYV) traverse the membrane as a helical segment. Topologically, residues 223 to 271 (LFPPAKSLSERLAVLKGLEPDTDWEEREVRRRQSVELHSPQSLPRGSKA) are cytoplasmic. The interval 251–271 (VRRRQSVELHSPQSLPRGSKA) is disordered. S256 is subject to Phosphoserine. Positions 261 to 271 (SPQSLPRGSKA) are enriched in polar residues.

This sequence belongs to the MIP/aquaporin (TC 1.A.8) family. Homotetramer. In terms of processing, ser-256 phosphorylation is necessary and sufficient for expression at the apical membrane. Endocytosis is not phosphorylation-dependent. N-glycosylated.

The protein resides in the apical cell membrane. It is found in the basolateral cell membrane. Its subcellular location is the cell membrane. The protein localises to the cytoplasmic vesicle membrane. It localises to the golgi apparatus. The protein resides in the trans-Golgi network membrane. It carries out the reaction H2O(in) = H2O(out). The catalysed reaction is glycerol(in) = glycerol(out). Forms a water-specific channel that provides the plasma membranes of renal collecting duct with high permeability to water, thereby permitting water to move in the direction of an osmotic gradient. Could also be permeable to glycerol. This Bos taurus (Bovine) protein is Aquaporin-2.